The sequence spans 517 residues: ATP synthase subunit beta (517 aa).

Composition is skewed to low complexity over residues 1 to 22 (MAKA…AAKA) and 29 to 42 (AKTA…APKA). The segment at 1–42 (MAKAATPKTTAAAEAKPAAAKAPAKKAPAKTAAAKSDAAPKA) is disordered. 195-202 (GGAGVGKT) contributes to the ATP binding site.

This sequence belongs to the ATPase alpha/beta chains family. F-type ATPases have 2 components, CF(1) - the catalytic core - and CF(0) - the membrane proton channel. CF(1) has five subunits: alpha(3), beta(3), gamma(1), delta(1), epsilon(1). CF(0) has three main subunits: a(1), b(2) and c(9-12). The alpha and beta chains form an alternating ring which encloses part of the gamma chain. CF(1) is attached to CF(0) by a central stalk formed by the gamma and epsilon chains, while a peripheral stalk is formed by the delta and b chains.

The protein localises to the cell inner membrane. It carries out the reaction ATP + H2O + 4 H(+)(in) = ADP + phosphate + 5 H(+)(out). Its function is as follows. Produces ATP from ADP in the presence of a proton gradient across the membrane. The catalytic sites are hosted primarily by the beta subunits. This chain is ATP synthase subunit beta, found in Brucella anthropi (strain ATCC 49188 / DSM 6882 / CCUG 24695 / JCM 21032 / LMG 3331 / NBRC 15819 / NCTC 12168 / Alc 37) (Ochrobactrum anthropi).